The primary structure comprises 483 residues: Malonate-semialdehyde dehydrogenase 2 (483 aa).

NAD(+) contacts are provided by Phe152, Lys176, Glu179, Arg180, and Ser229. The Nucleophile role is filled by Cys284. Glu384 contributes to the NAD(+) binding site.

This sequence belongs to the aldehyde dehydrogenase family. IolA subfamily. In terms of assembly, homotetramer.

The catalysed reaction is 3-oxopropanoate + NAD(+) + CoA + H2O = hydrogencarbonate + acetyl-CoA + NADH + H(+). It carries out the reaction 2-methyl-3-oxopropanoate + NAD(+) + CoA + H2O = propanoyl-CoA + hydrogencarbonate + NADH + H(+). It participates in polyol metabolism; myo-inositol degradation into acetyl-CoA; acetyl-CoA from myo-inositol: step 7/7. Functionally, catalyzes the oxidation of malonate semialdehyde (MSA) and methylmalonate semialdehyde (MMSA) into acetyl-CoA and propanoyl-CoA, respectively. Is involved in a myo-inositol catabolic pathway. Bicarbonate, and not CO2, is the end-product of the enzymatic reaction. This chain is Malonate-semialdehyde dehydrogenase 2, found in Bacillus mycoides (strain KBAB4) (Bacillus weihenstephanensis).